Here is a 528-residue protein sequence, read N- to C-terminus: Abrin-a (528 aa).

Residue Q1 is modified to Pyrrolidone carboxylic acid. The active site involves E164. Intrachain disulfides connect C247–C269, C286–C305, and C329–C346. One can recognise a Ricin B-type lectin 1 domain in the interval 273–400 (YEPTVRIGGR…YLMRQGWRTG (128 aa)). Residues 283–325 (DGMCVDVYDNGYHNGNRIIMWKCKDRLEENQLWTLKSDKTIRS) form a 1-alpha repeat. The 1-beta repeat unit spans residues 326–366 (NGKCLTTYGYAPGSYVMIYDCTSAVAEATYWEIWDNGTIIN). N-linked (GlcNAc...) asparagine glycosylation is found at N361 and N401. The 1-gamma repeat unit spans residues 369 to 401 (SALVLSAESSSMGGTLTVQTNEYLMRQGWRTGN). Positions 403–527 (TSPFVTSISG…GKPNQIWLTL (125 aa)) constitute a Ricin B-type lectin 2 domain. The stretch at 414-449 (SDLCMQAQGSNVWMADCDSNKKEQQWALYTDGSIRS) is one 2-alpha repeat. Intrachain disulfides connect C417–C430 and C456–C473. The stretch at 453-492 (TNNCLTSKDHKQGSTILLMGCSNGWASQRWVFKNDGSIYS) is one 2-beta repeat. The 2-gamma repeat unit spans residues 495–528 (DDMVMDVKGSDPSLKQIILWPYTGKPNQIWLTLF).

The protein in the N-terminal section; belongs to the ribosome-inactivating protein family. Type 2 RIP subfamily. Disulfide-linked dimer of A and B chains.

The catalysed reaction is Endohydrolysis of the N-glycosidic bond at one specific adenosine on the 28S rRNA.. The A chain is responsible for inhibiting protein synthesis through the catalytic inactivation of 60S ribosomal subunits by removing adenine from position 4,324 of 28S rRNA. Abrin-a is more toxic than ricin. Its function is as follows. The B chain is a galactose-specific lectin that facilitates the binding of abrin to the cell membrane that precedes endocytosis. In Abrus precatorius (Indian licorice), this protein is Abrin-a.